The primary structure comprises 101 residues: Small ribosomal subunit protein uS14 (101 aa).

The protein belongs to the universal ribosomal protein uS14 family. In terms of assembly, part of the 30S ribosomal subunit. Contacts proteins S3 and S10.

Functionally, binds 16S rRNA, required for the assembly of 30S particles and may also be responsible for determining the conformation of the 16S rRNA at the A site. In Bordetella parapertussis (strain 12822 / ATCC BAA-587 / NCTC 13253), this protein is Small ribosomal subunit protein uS14.